We begin with the raw amino-acid sequence, 366 residues long: tRNA-specific 2-thiouridylase MnmA (366 aa).

Residues 6 to 13 (AMSGGVDS) and leucine 32 contribute to the ATP site. The active-site Nucleophile is cysteine 101. Residues cysteine 101 and cysteine 199 are joined by a disulfide bond. Glycine 125 is a binding site for ATP. An interaction with tRNA region spans residues 149-151 (KDQ). The active-site Cysteine persulfide intermediate is the cysteine 199.

The protein belongs to the MnmA/TRMU family.

It localises to the cytoplasm. It catalyses the reaction S-sulfanyl-L-cysteinyl-[protein] + uridine(34) in tRNA + AH2 + ATP = 2-thiouridine(34) in tRNA + L-cysteinyl-[protein] + A + AMP + diphosphate + H(+). In terms of biological role, catalyzes the 2-thiolation of uridine at the wobble position (U34) of tRNA, leading to the formation of s(2)U34. The protein is tRNA-specific 2-thiouridylase MnmA of Corynebacterium diphtheriae (strain ATCC 700971 / NCTC 13129 / Biotype gravis).